A 312-amino-acid polypeptide reads, in one-letter code: Aminoacyl tRNA synthase complex-interacting multifunctional protein 1 (312 aa).

M1 carries the post-translational modification N-acetylmethionine. Residue A2 is modified to N-acetylalanine. The required for fibroblast proliferation stretch occupies residues 6–46; the sequence is AVLKRLEQKGAEADQIIEYLKQQVSLLKEKAILQATLREEK. The tract at residues 54 to 194 is interaction with HSP90B1; it reads KLKKEIEELK…APRTVVSGLV (141 aa). Residues 101–114 are required for endothelial cell death; the sequence is AVTTVSSGTKEQIK. The disordered stretch occupies residues 107–147; it reads SGTKEQIKGGTGDEKKAKEKIEKKGEKKEKKQQSIAGSADS. Basic and acidic residues predominate over residues 111–138; it reads EQIKGGTGDEKKAKEKIEKKGEKKEKKQ. The tract at residues 114-192 is required for endothelial cell migration; the sequence is KGGTGDEKKA…EIAPRTVVSG (79 aa). A Glycyl lysine isopeptide (Lys-Gly) (interchain with G-Cter in SUMO1) cross-link involves residue K137. Position 140 is a phosphoserine (S140). Residues 151–252 enclose the tRNA-binding domain; sequence DVSRLDLRIG…NGSVPGDRIT (102 aa). Position 269 is an N6-succinyllysine (K269).

As to quaternary structure, homodimer. Part of the multisynthetase complex (MSC), a multisubunit complex that groups tRNA ligases for Arg (RARS1), Asp (DARS1), Gln (QARS1), Ile (IARS1), Leu (LARS1), Lys (KARS1), Met (MARS1) the bifunctional ligase for Glu and Pro (EPRS1) and the auxiliary subunits AIMP1/p43, AIMP2/p38 and EEF1E1/p18. Interacts (via N-terminus) with RARS1 (via N-terminus). Part of a complex composed of RARS1, QARS1 and AIMP1. Interacts (via C-terminus) with SMURF2. Interacts (via N-terminus) with HSP90B1/gp96 (via C-terminus). Interacts with PSMA7. Interacts with TARS3. Post-translationally, cleaved by caspase-7 in response to apoptosis to produce EMAP-II.

It is found in the nucleus. It localises to the cytoplasm. Its subcellular location is the cytosol. The protein resides in the secreted. The protein localises to the endoplasmic reticulum. It is found in the golgi apparatus. In terms of biological role, non-catalytic component of the multisynthase complex. Stimulates the catalytic activity of cytoplasmic arginyl-tRNA synthase. Binds tRNA. Possesses inflammatory cytokine activity. Negatively regulates TGF-beta signaling through stabilization of SMURF2 by binding to SMURF2 and inhibiting its SMAD7-mediated degradation. Involved in glucose homeostasis through induction of glucagon secretion at low glucose levels. Promotes dermal fibroblast proliferation and wound repair. Regulates KDELR1-mediated retention of HSP90B1/gp96 in the endoplasmic reticulum. Plays a role in angiogenesis by inducing endothelial cell migration at low concentrations and endothelian cell apoptosis at high concentrations. Induces maturation of dendritic cells and monocyte cell adhesion. Modulates endothelial cell responses by degrading HIF-1A through interaction with PSMA7. This chain is Aminoacyl tRNA synthase complex-interacting multifunctional protein 1 (AIMP1), found in Homo sapiens (Human).